Reading from the N-terminus, the 380-residue chain is ATP phosphoribosyltransferase regulatory subunit (380 aa).

Belongs to the class-II aminoacyl-tRNA synthetase family. HisZ subfamily. Heteromultimer composed of HisG and HisZ subunits.

The protein localises to the cytoplasm. The protein operates within amino-acid biosynthesis; L-histidine biosynthesis; L-histidine from 5-phospho-alpha-D-ribose 1-diphosphate: step 1/9. Its function is as follows. Required for the first step of histidine biosynthesis. May allow the feedback regulation of ATP phosphoribosyltransferase activity by histidine. This Thermoanaerobacter sp. (strain X514) protein is ATP phosphoribosyltransferase regulatory subunit.